The following is a 144-amino-acid chain: MPPKKKKLAAIIKLQISAGQANPAPPVGPALGQHGVNIMEFCKAYNAATESQRGDVVPVEISVFEDRSFDFKLKTPPAAKLLLKAAGVQKGSGEPHKTKVGKVSMDQIREIAQTKMVDLNANDLDQASKIIAGTARSMGLTVEG.

The protein belongs to the universal ribosomal protein uL11 family. Part of the ribosomal stalk of the 50S ribosomal subunit. Interacts with L10 and the large rRNA to form the base of the stalk. L10 forms an elongated spine to which L12 dimers bind in a sequential fashion forming a multimeric L10(L12)X complex. Post-translationally, one or more lysine residues are methylated.

Functionally, forms part of the ribosomal stalk which helps the ribosome interact with GTP-bound translation factors. This chain is Large ribosomal subunit protein uL11, found in Saccharopolyspora erythraea (strain ATCC 11635 / DSM 40517 / JCM 4748 / NBRC 13426 / NCIMB 8594 / NRRL 2338).